We begin with the raw amino-acid sequence, 604 residues long: MGAALGTGARLTSVPRIACSSLRRQAPSAPAQGCHSKSGPPRPVPLKKRGYDVTRNPHLNKGMAFTLEERLQLGIHGLIPPCFLSQDVQLLRIMRYYENQQSDLDKYIILMTLQDRNEKLFYRVLTSDVEKFMPIVYTPTVGLACQHYGLTFRRPRGLFITIHDKGHIATMLNSWPEDNIKAVVVTDGERILGLGDLGCYGMGIPVGKLALYTACGGVNPQQCLPVLLDVGTNNEELLRDPLYIGLKHQRVRGEEYDDLLDEFMQAVTDKFGINCLIQFEDFANANAFRLLNKYRNKYCMFNDDIQGTASVAVAGILAALRITKNRLSNHVFVFQGAGEAAMGIAHLLVMALEKEGIPKTEAIKKIWMVDSKGLIVKGRSHLNHEKEMFAQDHPEVNSLEEVVRLVKPTAIIGVAAIAGAFTEQILRDMASFHERPIVFALSNPTSKAECTAEKCYRVTEGRGIFASGSPFKSVTLEDGRTFTPGQGNNAYVFPGVALGVIAGGIRHIPDEIFLLTAEQIAQEVSEQHLSQGRLYPPLSTIRDVSLRIAVKVLDYAYKHNLASYYPEPKDKEAFVKSLIYTPDYDSFSLDTYSWPKEAMSVQKV.

The interval 28-50 is disordered; sequence SAPAQGCHSKSGPPRPVPLKKRG. The Proton donor role is filled by Y137. R190 serves as a coordination point for NADP(+). The active-site Proton acceptor is the K208. A divalent metal cation is bound by residues E280, D281, and D304. D304 is an NADP(+) binding site. Phosphoserine is present on S371. N443 provides a ligand contact to NADP(+).

Belongs to the malic enzymes family. The cofactor is Mg(2+). Mn(2+) is required as a cofactor.

Its subcellular location is the mitochondrion matrix. The catalysed reaction is (S)-malate + NADP(+) = pyruvate + CO2 + NADPH. It carries out the reaction oxaloacetate + H(+) = pyruvate + CO2. This chain is NADP-dependent malic enzyme, mitochondrial (Me3), found in Mus musculus (Mouse).